We begin with the raw amino-acid sequence, 391 residues long: Elongation factor Tu (391 aa).

The 192-residue stretch at Lys-10–Glu-201 folds into the tr-type G domain. The G1 stretch occupies residues Gly-19–Thr-26. GTP is bound at residue Gly-19–Thr-26. Residue Thr-26 coordinates Mg(2+). Positions Gly-55 to Ser-59 are G2. Positions Asp-76–Gly-79 are G3. GTP is bound by residues Asp-76–His-80 and Asn-131–Asp-134. Residues Asn-131–Asp-134 form a G4 region. The interval Ser-169–Leu-171 is G5.

Belongs to the TRAFAC class translation factor GTPase superfamily. Classic translation factor GTPase family. EF-Tu/EF-1A subfamily. In terms of assembly, monomer.

The protein resides in the cytoplasm. It carries out the reaction GTP + H2O = GDP + phosphate + H(+). Its function is as follows. GTP hydrolase that promotes the GTP-dependent binding of aminoacyl-tRNA to the A-site of ribosomes during protein biosynthesis. The polypeptide is Elongation factor Tu (Rhizobium meliloti (strain 1021) (Ensifer meliloti)).